We begin with the raw amino-acid sequence, 899 residues long: Tubulin glycylase 3F (899 aa).

The region spanning Phe471–Lys835 is the TTL domain. Residues Gln642 to Ile645, Lys663, and Asp665 contribute to the ATP site.

The protein localises to the cytoplasm. It is found in the cytoskeleton. The protein resides in the cilium basal body. Functionally, probable glycylase which modifies tubulin, generating side chains of glycine on the gamma-carboxyl groups of specific glutamate residues within the C-terminal tail of tubulin. In Tetrahymena thermophila (strain SB210), this protein is Tubulin glycylase 3F (TTLL3F).